Reading from the N-terminus, the 389-residue chain is 3-oxo-Delta(4,5)-steroid 5-beta-reductase (389 aa).

NADP(+) contacts are provided by residues 35 to 37, 63 to 64, 81 to 82, T105, and Q143; these read TGI, RR, and DI. Catalysis depends on residues K147 and Y179. NADP(+) contacts are provided by residues Y179, I206, and 213 to 215; that span reads SMM.

It belongs to the short-chain dehydrogenases/reductases (SDR) family. Highly divergent. As to quaternary structure, homodimer.

The catalysed reaction is 5beta-cholestan-3-one + NADP(+) = cholest-4-en-3-one + NADPH + H(+). The enzyme catalyses 4,5beta-dihydrocortisone + NADP(+) = cortisone + NADPH + H(+). In terms of biological role, involved in cardenolide biosynthesis. Catalyzes the stereospecific conversion of progesterone to 5-beta-pregnane-3,20-dione. Can use progesterone, testosterone, 4-androstene-3,17-dione, cortisol and cortisone as substrates, but not pregnenolone, 21-OH-pregnenolone or isoprogesterone. NADPH could not be replaced by NADH. This is 3-oxo-Delta(4,5)-steroid 5-beta-reductase from Digitalis lanata (Grecian foxglove).